Here is a 538-residue protein sequence, read N- to C-terminus: Eukaryotic translation initiation factor 3 subunit L (538 aa).

Positions 305 to 513 constitute a PCI domain; that stretch reads TFSDILLYIQ…IHIADTKVSH (209 aa).

Belongs to the eIF-3 subunit L family. As to quaternary structure, component of the eukaryotic translation initiation factor 3 (eIF-3) complex. The eIF-3 complex interacts with pix.

It localises to the cytoplasm. In terms of biological role, component of the eukaryotic translation initiation factor 3 (eIF-3) complex, which is involved in protein synthesis of a specialized repertoire of mRNAs and, together with other initiation factors, stimulates binding of mRNA and methionyl-tRNAi to the 40S ribosome. The eIF-3 complex specifically targets and initiates translation of a subset of mRNAs involved in cell proliferation. The protein is Eukaryotic translation initiation factor 3 subunit L of Drosophila mojavensis (Fruit fly).